The chain runs to 517 residues: 2-isopropylmalate synthase (517 aa).

The region spanning 5–268 is the Pyruvate carboxyltransferase domain; that stretch reads IIIFDTTLRD…DTRINTQEIH (264 aa). Mn(2+) is bound by residues aspartate 14, histidine 202, histidine 204, and asparagine 238. Residues 393–517 form a regulatory domain region; it reads SLDVITSQTI…ADLKSHKISQ (125 aa).

The protein belongs to the alpha-IPM synthase/homocitrate synthase family. LeuA type 1 subfamily. Homodimer. It depends on Mn(2+) as a cofactor.

Its subcellular location is the cytoplasm. The enzyme catalyses 3-methyl-2-oxobutanoate + acetyl-CoA + H2O = (2S)-2-isopropylmalate + CoA + H(+). Its pathway is amino-acid biosynthesis; L-leucine biosynthesis; L-leucine from 3-methyl-2-oxobutanoate: step 1/4. Catalyzes the condensation of the acetyl group of acetyl-CoA with 3-methyl-2-oxobutanoate (2-ketoisovalerate) to form 3-carboxy-3-hydroxy-4-methylpentanoate (2-isopropylmalate). The chain is 2-isopropylmalate synthase from Histophilus somni (strain 2336) (Haemophilus somnus).